The primary structure comprises 66 residues: DNA-directed RNA polymerase subunit Rpo10 (66 aa).

4 residues coordinate Zn(2+): Cys-7, Cys-10, Cys-44, and Cys-45.

The protein belongs to the archaeal Rpo10/eukaryotic RPB10 RNA polymerase subunit family. Part of the RNA polymerase complex. Zn(2+) is required as a cofactor.

Its subcellular location is the cytoplasm. The enzyme catalyses RNA(n) + a ribonucleoside 5'-triphosphate = RNA(n+1) + diphosphate. In terms of biological role, DNA-dependent RNA polymerase (RNAP) catalyzes the transcription of DNA into RNA using the four ribonucleoside triphosphates as substrates. The chain is DNA-directed RNA polymerase subunit Rpo10 from Saccharolobus islandicus (strain Y.N.15.51 / Yellowstone #2) (Sulfolobus islandicus).